Here is a 96-residue protein sequence, read N- to C-terminus: (4S)-4-hydroxy-5-phosphonooxypentane-2,3-dione isomerase (96 aa).

Residues 2 to 91 enclose the ABM domain; sequence HVTLVEINVK…MTGPRKKTVF (90 aa).

It belongs to the LsrG family. As to quaternary structure, homodimer.

It localises to the cytoplasm. It carries out the reaction (2S)-2-hydroxy-3,4-dioxopentyl phosphate = 3-hydroxy-2,4-dioxopentyl phosphate. Its function is as follows. Involved in the degradation of phospho-AI-2, thereby terminating induction of the lsr operon and closing the AI-2 signaling cycle. Catalyzes the conversion of (4S)-4-hydroxy-5-phosphonooxypentane-2,3-dione (P-DPD) to 3-hydroxy-5-phosphonooxypentane-2,4-dione (P-HPD). The protein is (4S)-4-hydroxy-5-phosphonooxypentane-2,3-dione isomerase of Yersinia pseudotuberculosis serotype O:1b (strain IP 31758).